The sequence spans 669 residues: PAN2-PAN3 deadenylation complex subunit PAN3 (669 aa).

Polar residues predominate over residues 1–10 (MATTFGSPSG). The interval 1-25 (MATTFGSPSGDSRRGVASPRPKGRE) is disordered. The C3H1-type zinc finger occupies 25–54 (EAKNTFCRNVTIYGHCRYENSKCRPPHLPD). A pseudokinase domain region spans residues 247–519 (QVMPNSTLPV…DIDNFLGGIS (273 aa)). Residues Arg298, 347–354 (DYHPNSKS), and 408–409 (SK) each bind ATP. A coiled-coil region spans residues 520–558 (DQLASVFDSELHAQDTLTNTLGRELESSRIVRLLVKLNM). Residues 559 to 669 (VNERPELDAS…LIRAGRGQGK (111 aa)) form a knob domain region.

Belongs to the protein kinase superfamily. PAN3 family. As to quaternary structure, homodimer. Forms a heterotrimer with a catalytic subunit PAN2 to form the poly(A)-nuclease (PAN) deadenylation complex. Interacts (via PAM-2 motif) with poly(A)-binding protein PAB1 (via PABC domain), conferring substrate specificity of the enzyme complex.

The protein resides in the cytoplasm. In terms of biological role, regulatory subunit of the poly(A)-nuclease (PAN) deadenylation complex, one of two cytoplasmic mRNA deadenylases involved in mRNA turnover. PAN specifically shortens poly(A) tails of RNA and the activity is stimulated by poly(A)-binding protein PAB1. PAN deadenylation is followed by rapid degradation of the shortened mRNA tails by the CCR4-NOT complex. Deadenylated mRNAs are then degraded by two alternative mechanisms, namely exosome-mediated 3'-5' exonucleolytic degradation, or deadenylation-dependent mRNA decaping and subsequent 5'-3' exonucleolytic degradation by XRN1. May also be involved in post-transcriptional maturation of mRNA poly(A) tails. PAN3 acts as a positive regulator for PAN activity, recruiting the catalytic subunit PAN2 to mRNA via its interaction with RNA and with PAB1. The sequence is that of PAN2-PAN3 deadenylation complex subunit PAN3 from Phaeosphaeria nodorum (strain SN15 / ATCC MYA-4574 / FGSC 10173) (Glume blotch fungus).